Here is a 224-residue protein sequence, read N- to C-terminus: Ribose-5-phosphate isomerase A (224 aa).

Substrate is bound by residues 32 to 35 (TGST), 85 to 88 (DGAD), and 98 to 101 (KGGG). Glu-107 functions as the Proton acceptor in the catalytic mechanism. Lys-125 is a substrate binding site.

The protein belongs to the ribose 5-phosphate isomerase family. Homodimer.

It catalyses the reaction aldehydo-D-ribose 5-phosphate = D-ribulose 5-phosphate. It participates in carbohydrate degradation; pentose phosphate pathway; D-ribose 5-phosphate from D-ribulose 5-phosphate (non-oxidative stage): step 1/1. Catalyzes the reversible conversion of ribose-5-phosphate to ribulose 5-phosphate. This chain is Ribose-5-phosphate isomerase A, found in Pseudomonas fluorescens (strain Pf0-1).